The primary structure comprises 918 residues: Band 3 anion exchange protein (918 aa).

The interval 1 to 48 is disordered; that stretch reads MENDLSFGEDVMSYEEESDSAFPSPIRPTPPGHSGNYDLEQSRQEEDS. The Cytoplasmic segment spans residues 1–392; that stretch reads MENDLSFGED…ISDFTDALDP (392 aa). A helical membrane pass occupies residues 393-416; it reads QVLAAVIFIYFAALSPAITFGGLL. Residues 417 to 424 are Extracellular-facing; sequence ADKTEHMM. A helical transmembrane segment spans residues 425 to 445; it reads GVSELMISTCVQGIIFAFIAA. At 446–448 the chain is on the cytoplasmic side; it reads QPT. Residues 449–465 form a discontinuously helical membrane-spanning segment; it reads LVIGFSGPLLVFEEAFF. The Extracellular portion of the chain corresponds to 466 to 474; the sequence is AFCKSQEIE. The helical transmembrane segment at 475–495 threads the bilayer; sequence YIVGRIWVGLWLVIIVVVIVA. At 496–507 the chain is on the cytoplasmic side; sequence VEGSFLVKFISR. A helical membrane pass occupies residues 508–530; the sequence is FTQEIFSILISLIFIYETFSKLG. Topologically, residues 531-583 are extracellular; the sequence is KIFKAHPLVLNYEHLNDSLDNPFHPVVKEHIEYHEDGNKTVHEVIHERAYPNT. N-linked (GlcNAc...) asparagine glycans are attached at residues asparagine 546 and asparagine 568. A helical membrane pass occupies residues 584 to 604; sequence ALLSMCLMFGCFFIAYFLRQF. Residues 605 to 615 lie on the Cytoplasmic side of the membrane; sequence KNGHFLPGPIR. A helical transmembrane segment spans residues 616-636; it reads RMIGDFGVPIAIFFMIAVDIT. The Extracellular segment spans residues 637-676; it reads IEDAYTQKLVVPKGLMVSNPNARGWFINPLGEKKPFPAWM. Residues 677–697 traverse the membrane as a helical segment; it reads MGACCVPALLVFILIFLESQI. The Cytoplasmic segment spans residues 698–713; that stretch reads TTLIVSKPERKMVKGS. A helical transmembrane segment spans residues 714–732; sequence GFHLDLLILVTMGGIASLF. The discontinuously helical transmembrane segment at 733–750 threads the bilayer; that stretch reads GVPWLSAATVRSVTHANA. The Cytoplasmic portion of the chain corresponds to 751–769; sequence LTVMSKGPKPEIEKVLEQR. 2 consecutive transmembrane segments (helical) span residues 770-790 and 791-809; these read ISGM…PILK and MIPM…ITSL. At 810 to 847 the chain is on the cytoplasmic side; it reads SGIQMWDRMLLLIVPRKYYPADAYAQRVTTMKMHLFTL. Positions 848–878 form an intramembrane region, discontinuously helical; the sequence is IQMVCLGALWMVKMSAFSLALPFVLILTIPL. Cysteine 852 is lipidated: S-palmitoyl cysteine. The Cytoplasmic segment spans residues 879–918; that stretch reads RMAITGTLFTDKEMKCLDASDGKVKFEEEPGEDMYESPLP.

It belongs to the anion exchanger (TC 2.A.31) family. A dimer in solution, it spans the membrane asymmetrically and appears to be tetrameric.

The protein resides in the cell membrane. The catalysed reaction is hydrogencarbonate(in) + chloride(out) = hydrogencarbonate(out) + chloride(in). Its function is as follows. Functions both as a transporter that mediates electroneutral anion exchange across the cell membrane and as a structural protein. Major integral membrane glycoprotein of the erythrocyte membrane; required for normal flexibility and stability of the erythrocyte membrane and for normal erythrocyte shape via the interactions of its cytoplasmic domain with cytoskeletal proteins, glycolytic enzymes, and hemoglobin. Functions as a transporter that mediates the 1:1 exchange of inorganic anions across the erythrocyte membrane. Mediates chloride-bicarbonate exchange in the kidney, and is required for normal acidification of the urine. The chain is Band 3 anion exchange protein (slc4a1) from Oncorhynchus mykiss (Rainbow trout).